Here is a 145-residue protein sequence, read N- to C-terminus: Maximins 3/H9 type 1 (145 aa).

A signal peptide spans 1-18 (MNFKYIVAVSFLIASAYA). 2 consecutive propeptides follow at residues 19-43 (RSVQNDEQSLSQRDVLEEEESLREI) and 74-124 (RTAE…KEKR). Residue Ile144 is modified to Isoleucine amide.

It belongs to the bombinin family. As to expression, expressed by the skin glands.

It is found in the secreted. Functionally, maximin-3 shows antibacterial activity against both Gram-positive and Gram-negative bacteria. It also shows antimicrobial activity against the fungus C.albicans, but not against A.flavus nor P.uticale. It has little hemolytic activity. It possess a significant cytotoxicity against tumor cell lines. It possess a significant anti-HIV activity. It shows high spermicidal activity. In terms of biological role, maximin-H9 shows antimicrobial activity against bacteria and against the fungus C.albicans. Shows strong hemolytic activity. In Bombina maxima (Giant fire-bellied toad), this protein is Maximins 3/H9 type 1.